Consider the following 345-residue polypeptide: L-Ala-D/L-Glu epimerase (345 aa).

2 residues coordinate substrate: threonine 134 and lysine 159. Lysine 161 serves as the catalytic Proton acceptor; specific for (R)-substrate epimerization. Aspartate 188 serves as a coordination point for Mg(2+). Asparagine 190 contacts substrate. Mg(2+) is bound by residues glutamate 216 and aspartate 241. Residue lysine 265 is the Proton acceptor; specific for (S)-substrate epimerization of the active site. 3 residues coordinate substrate: cysteine 292, aspartate 317, and aspartate 319.

The protein belongs to the mandelate racemase/muconate lactonizing enzyme family. Requires Mg(2+) as cofactor.

The catalysed reaction is L-alanyl-L-glutamate = L-alanyl-D-glutamate. It participates in cell wall degradation; peptidoglycan degradation. Functionally, catalyzes the epimerization of L-Ala-D-Glu to L-Ala-L-Glu and has probably a role in the metabolism of the murein peptide, of which L-Ala-D-Glu is a component. Is also able to catalyze the reverse reaction and the epimerization of a broad range of other dipeptides; is most efficient with L-Ala-D/L-Phe, L-Ala-D/L-Tyr, and L-Ala-D/L-His. This chain is L-Ala-D/L-Glu epimerase, found in Thermotoga maritima (strain ATCC 43589 / DSM 3109 / JCM 10099 / NBRC 100826 / MSB8).